Consider the following 109-residue polypeptide: Probable gas vesicle protein J1 (109 aa).

This sequence belongs to the gas vesicle GvpA family. Interacts with GvpA.

The protein localises to the gas vesicle. Functionally, a minor component of the gas vesicle, might be involved in nucleating gas vesicle formation. Gas vesicles (GV) are hollow, gas filled proteinaceous nanostructures. It is not clear what function GVs perform in soil bacteria. The protein is Probable gas vesicle protein J1 (gvpJ1) of Streptomyces coelicolor (strain ATCC BAA-471 / A3(2) / M145).